The following is a 272-amino-acid chain: Streptomycin 3''-kinase (272 aa).

Residue aspartate 190 is the Proton acceptor of the active site.

This sequence belongs to the aminoglycoside phosphotransferase family.

It carries out the reaction streptomycin + ATP = streptomycin 3''-phosphate + ADP + H(+). The aminoglycoside phosphotransferases achieve inactivation of their antibiotic substrates by phosphorylation. This Streptomyces griseus protein is Streptomycin 3''-kinase (aphE).